Reading from the N-terminus, the 111-residue chain is DNA-binding protein AF_2068 (111 aa).

This sequence belongs to the PDCD5 family.

In Archaeoglobus fulgidus (strain ATCC 49558 / DSM 4304 / JCM 9628 / NBRC 100126 / VC-16), this protein is DNA-binding protein AF_2068.